Consider the following 405-residue polypeptide: F-box/kelch-repeat protein At2g43445 (405 aa).

Residues 7–53 enclose the F-box domain; sequence NTNSIYIVSELLEEIFLGLPLKSILKFKTVSKQWRSILESNLFVERR. 2 Kelch repeats span residues 146–197 and 356–400; these read RDKV…CVNG and THHD…VVGY.

In Arabidopsis thaliana (Mouse-ear cress), this protein is F-box/kelch-repeat protein At2g43445.